The primary structure comprises 404 residues: Voltage-gated potassium channel subunit beta-3 (404 aa).

Residues 1–14 (MQVSIACTEQNLRS) are compositionally biased toward polar residues. Residues 1 to 78 (MQVSIACTEQ…RESTGRGTGM (78 aa)) form a disordered region. The segment covering 28–50 (PGGGNGGPVGGGHGNPPGGGGLG) has biased composition (gly residues). NADP(+) is bound by residues Thr-97, Trp-98, Gln-104, and Asp-126. The active-site Proton donor/acceptor is the Tyr-131. Residues Asn-199, Ser-229, Arg-230, Gln-255, Trp-284, Ser-285, Pro-286, Leu-287, Ala-288, Cys-289, Lys-295, Lys-305, Gly-364, Ser-366, Gln-370, and Glu-373 each contribute to the NADP(+) site.

This sequence belongs to the shaker potassium channel beta subunit family. In terms of assembly, forms heteromultimeric complex with alpha subunits. Interacts with KCNA5 and KCNB2. Predominantly expressed in brain. Strongest expression in olfactory bulb and thalamic nuclei. Not detected in heart, spleen, lung, liver, skeletal muscle, kidney and testis.

Its subcellular location is the cytoplasm. In terms of biological role, regulatory subunit of the voltage-gated potassium (Kv) channels composed of pore-forming and potassium-conducting alpha subunits and of regulatory beta subunits. The beta-3/KCNAB3 subunit may mediate closure of potassium channels. Inactivates Kv1.4/KCNA4 alpha subunit-containing Kv channel current but not Kv1.1/KCNA1 or Kv1.5/KCNA5 channels. May display nicotinamide adenine dinucleotide phosphate (NADPH)-dependent aldoketoreductase activity. The binding of oxidized and reduced NADP(H) cofactors may be required for the regulation of potassium channel activity. This is Voltage-gated potassium channel subunit beta-3 from Rattus norvegicus (Rat).